The sequence spans 175 residues: ATP synthase subunit delta (175 aa).

Belongs to the ATPase delta chain family. As to quaternary structure, F-type ATPases have 2 components, F(1) - the catalytic core - and F(0) - the membrane proton channel. F(1) has five subunits: alpha(3), beta(3), gamma(1), delta(1), epsilon(1). F(0) has three main subunits: a(1), b(2) and c(10-14). The alpha and beta chains form an alternating ring which encloses part of the gamma chain. F(1) is attached to F(0) by a central stalk formed by the gamma and epsilon chains, while a peripheral stalk is formed by the delta and b chains.

The protein localises to the cell membrane. Functionally, f(1)F(0) ATP synthase produces ATP from ADP in the presence of a proton or sodium gradient. F-type ATPases consist of two structural domains, F(1) containing the extramembraneous catalytic core and F(0) containing the membrane proton channel, linked together by a central stalk and a peripheral stalk. During catalysis, ATP synthesis in the catalytic domain of F(1) is coupled via a rotary mechanism of the central stalk subunits to proton translocation. Its function is as follows. This protein is part of the stalk that links CF(0) to CF(1). It either transmits conformational changes from CF(0) to CF(1) or is implicated in proton conduction. In Brevibacillus brevis (strain 47 / JCM 6285 / NBRC 100599), this protein is ATP synthase subunit delta.